Consider the following 60-residue polypeptide: Metallothionein B (60 aa).

The segment at 1 to 28 (MDPCECTKSGTCNCGGSCTCTNCSCTSC) is beta. Cysteine 4, cysteine 6, cysteine 12, cysteine 14, cysteine 18, cysteine 20, cysteine 23, cysteine 25, cysteine 28, cysteine 32, cysteine 33, cysteine 35, cysteine 36, cysteine 40, cysteine 43, cysteine 47, cysteine 49, cysteine 54, cysteine 58, and cysteine 59 together coordinate a divalent metal cation. The segment at 29-60 (KKSCCPCCPSGCTKCASGCVCKGKTCDTSCCQ) is alpha.

The protein belongs to the metallothionein superfamily. Type 1 family.

Its function is as follows. Metallothioneins have a high content of cysteine residues that bind various heavy metals. The chain is Metallothionein B (mtb) from Chaenocephalus aceratus (Blackfin icefish).